The sequence spans 546 residues: Amidophosphoribosyltransferase (546 aa).

A compositionally biased stretch (low complexity) spans 1-26; the sequence is MSAPQQQQQSQQKQQQHVRVVEQQQV. Residues 1-39 are disordered; it reads MSAPQQQQQSQQKQQQHVRVVEQQQVEPAEAVTSSMESE. Positions 1–53 are excised as a propeptide; that stretch reads MSAPQQQQQSQQKQQQHVRVVEQQQVEPAEAVTSSMESESISASKELTGLTHE. The Nucleophile role is filled by C54. The region spanning 54–302 is the Glutamine amidotransferase type-2 domain; sequence CGVFGAIACG…PGEIVELSRS (249 aa). Position 113 is a phosphoserine (S113). At T114 the chain carries Phosphothreonine. S120 is modified (phosphoserine). C321 serves as a coordination point for [4Fe-4S] cluster. Residues S368, D430, and D431 each contribute to the Mg(2+) site. Residues C467, C528, and C531 each contribute to the [4Fe-4S] cluster site.

This sequence in the C-terminal section; belongs to the purine/pyrimidine phosphoribosyltransferase family. Mg(2+) is required as a cofactor. It depends on [4Fe-4S] cluster as a cofactor.

The catalysed reaction is 5-phospho-beta-D-ribosylamine + L-glutamate + diphosphate = 5-phospho-alpha-D-ribose 1-diphosphate + L-glutamine + H2O. It functions in the pathway purine metabolism; IMP biosynthesis via de novo pathway; N(1)-(5-phospho-D-ribosyl)glycinamide from 5-phospho-alpha-D-ribose 1-diphosphate: step 1/2. Functionally, involved in the first step (and regulatory point) of the de novo biosynthesis of purine nucleotides, where it catalyzes the transfer of glutamine amide to 5-phospho-alpha-D-ribose 1-diphosphate. This chain is Amidophosphoribosyltransferase (Prat), found in Drosophila melanogaster (Fruit fly).